A 443-amino-acid polypeptide reads, in one-letter code: GTPase Der (443 aa).

EngA-type G domains follow at residues 3-168 and 178-353; these read PLLA…PEAP and VHLA…RNRS. GTP-binding positions include 9 to 16, 56 to 60, 120 to 123, 184 to 191, 231 to 235, and 296 to 299; these read GRPNVGKS, DTGGY, NKVE, DTAGL, and NKWD. Residues 354–438 enclose the KH-like domain; that stretch reads QNVSTSQLNK…PISLRFLHKN (85 aa).

Belongs to the TRAFAC class TrmE-Era-EngA-EngB-Septin-like GTPase superfamily. EngA (Der) GTPase family. Associates with the 50S ribosomal subunit.

Its function is as follows. GTPase that plays an essential role in the late steps of ribosome biogenesis. This chain is GTPase Der, found in Chlorobium chlorochromatii (strain CaD3).